The following is a 593-amino-acid chain: Trehalose synthase/amylase TreS (593 aa).

Substrate is bound at residue Asp90. Asn132 is a binding site for Ca(2+). Substrate-binding residues include His133 and Gln198. Asp200 provides a ligand contact to Ca(2+). Residue Arg228 coordinates substrate. Residue Asp230 is the Nucleophile of the active site. Ca(2+)-binding residues include Tyr234, Leu235, and Glu237. The active-site Proton donor is the Glu272. Substrate-binding residues include His341 and Asp342.

This sequence belongs to the glycosyl hydrolase 13 family. TreS subfamily. Homohexamer.

The catalysed reaction is D-maltose = alpha,alpha-trehalose. The enzyme catalyses Endohydrolysis of (1-&gt;4)-alpha-D-glucosidic linkages in polysaccharides containing three or more (1-&gt;4)-alpha-linked D-glucose units.. Its pathway is glycan biosynthesis; glycogen biosynthesis. The amylase activity is stimulated by addition of Ca(2+), but this cation and other divalent cations inhibit the trehalose synthase activity. In addition, trehalose synthase activity, but not amylase activity, is strongly inhibited, and in a competitive manner, by validoxylamine. On the other hand, amylase, but not trehalose synthase activity, is inhibited by the known transition-state amylase inhibitor, acarbose, suggesting the possibility of two different active sites. Other metal ions such as Mg(2+), Mn(2+), and Co(2+) are also somewhat effective in the stimulation of amylase activity, but Hg(2+), Cu(2+), Ni(2+) and Zn(2+) are inhibitory. In terms of biological role, catalyzes the reversible interconversion of maltose and trehalose by transglucosylation. Maltose is the preferred substrate. To a lesser extent, also displays amylase activity, catalyzing the endohydrolysis of (1-&gt;4)-alpha-D-glucosidic linkages in glycogen and maltooligosaccharides such as maltoheptaose, to produce maltose which then can be converted to trehalose. TreS plays a key role in the utilization of trehalose for the production of glycogen and alpha-glucan via the TreS-Pep2 branch involved in the biosynthesis of maltose-1-phosphate (M1P). Might also function as a sensor and/or regulator of trehalose levels within the cell. Thus, when trehalose levels in the cell become dangerously low, TreS can expedite the conversion of glycogen to maltose via its amylase activity and then convert the maltose to trehalose; but this enzyme also can expedite or promote the conversion of trehalose to glycogen when cytoplasmic trehalose levels become too high. Is also able to catalyze the hydrolytic cleavage of alpha-aryl glucosides, as well as alpha-glucosyl fluoride in vitro. This chain is Trehalose synthase/amylase TreS, found in Mycolicibacterium smegmatis (strain ATCC 700084 / mc(2)155) (Mycobacterium smegmatis).